A 352-amino-acid polypeptide reads, in one-letter code: C-C chemokine receptor type 5 (352 aa).

The Extracellular portion of the chain corresponds to 1 to 30; sequence MDYQVSSPTYDIDYYTSEPCQKINVKQIAA. At Tyr-3 the chain carries Sulfotyrosine. O-linked (GalNAc...) serine glycosylation is found at Ser-6 and Ser-7. Sulfotyrosine is present on residues Tyr-10, Tyr-14, and Tyr-15. 2 cysteine pairs are disulfide-bonded: Cys-20–Cys-269 and Cys-101–Cys-178. The helical transmembrane segment at 31-58 threads the bilayer; sequence HLLPPLYSLVFIFGFVGNILVVLILINC. Residues 59–68 lie on the Cytoplasmic side of the membrane; the sequence is KRLKSMTDIY. The helical transmembrane segment at 69 to 89 threads the bilayer; it reads LLNLAISDLLFLLTVPFWAHY. Over 90–102 the chain is Extracellular; the sequence is AAAQWDFGNIMCQ. Residues 103-124 form a helical membrane-spanning segment; sequence LLTGLYFIGFFSGIFFIILLTI. Residues 125 to 141 are Cytoplasmic-facing; that stretch reads DRYLAIVHAVFALKART. Residues 142-166 form a helical membrane-spanning segment; the sequence is VTFGVVTSVITWVVAVFASLPGIIF. Residues 167-198 lie on the Extracellular side of the membrane; sequence TRSQREGLHYTCSSHFPYSQYQFWKNFRTLKI. The helical transmembrane segment at 199-218 threads the bilayer; it reads VILGLVLPLLVMVICYSGIL. Over 219-235 the chain is Cytoplasmic; it reads KTLLRCRNEKKRHRAVR. A helical membrane pass occupies residues 236–260; the sequence is LIFTIMIVYFLFWAPYNIVLLLNTF. Residues 261 to 277 lie on the Extracellular side of the membrane; that stretch reads QEFFGLNNCSSSNRLDQ. A helical transmembrane segment spans residues 278 to 301; sequence AMQVTETLGMTHCCINPIIYAFVG. Over 302–352 the chain is Cytoplasmic; it reads EKFRNYLLVFFQKHIAKRFCKCCSIFQQEAPERASSVYTRSTGEQEISVGL. 3 S-palmitoyl cysteine lipidation sites follow: Cys-321, Cys-323, and Cys-324. Phosphoserine; by BARK1 occurs at positions 336, 337, 342, and 349.

It belongs to the G-protein coupled receptor 1 family. As to quaternary structure, interacts with PRAF2. Efficient ligand binding to CCL3/MIP-1alpha and CCL4/MIP-1beta requires sulfation, O-glycosylation and sialic acid modifications. Glycosylation on Ser-6 is required for efficient binding of CCL4. Interacts with GRK2. Interacts with ARRB1 and ARRB2. Interacts with CNIH4. Interacts with S100A4; this interaction stimulates T-lymphocyte chemotaxis. In terms of processing, sulfated on at least 2 of the N-terminal tyrosines. Sulfation is required for efficient binding of the chemokines, CCL3 and CCL4. Palmitoylation in the C-terminal is important for cell surface expression. Post-translationally, phosphorylation on serine residues in the C-terminal is stimulated by binding CC chemokines especially by APO-RANTES. In terms of processing, O-glycosylated, but not N-glycosylated. Ser-6 appears to be the major site even if Ser-7 may be also O-glycosylated. Also sialylated glycans present which contribute to chemokine binding. Thr-16 and Ser-17 may also be glycosylated and, if so, with small moieties such as a T-antigen.

The protein resides in the cell membrane. In terms of biological role, receptor for a number of inflammatory CC-chemokines including CCL3/MIP-1-alpha, CCL4/MIP-1-beta and RANTES and subsequently transduces a signal by increasing the intracellular calcium ion level. May play a role in the control of granulocytic lineage proliferation or differentiation. Participates in T-lymphocyte migration to the infection site by acting as a chemotactic receptor. In Mandrillus sphinx (Mandrill), this protein is C-C chemokine receptor type 5 (CCR5).